A 316-amino-acid polypeptide reads, in one-letter code: Endochitinase 2 (316 aa).

Residues 1–18 (EFTTLFLLFSVLLLSASA) form the signal peptide. The Chitin-binding type-1 domain maps to 19 to 60 (EQCGSQAGGALCASGLCCSKFGWCGNTNDYCGPGNCQSQCPG). 7 disulfides stabilise this stretch: C21–C36, C30–C42, C35–C49, C54–C58, C87–C150, C162–C170, and C269–C301. E132 (proton donor) is an active-site residue. Positions 310–316 (GLLVDTV) are cleaved as a propeptide — removed in mature form, vacuolar targeting.

This sequence belongs to the glycosyl hydrolase 19 family. Chitinase class I subfamily.

It is found in the vacuole. The catalysed reaction is Random endo-hydrolysis of N-acetyl-beta-D-glucosaminide (1-&gt;4)-beta-linkages in chitin and chitodextrins.. Functionally, defense against chitin-containing fungal pathogens. The chain is Endochitinase 2 (CHTB2) from Solanum tuberosum (Potato).